We begin with the raw amino-acid sequence, 1393 residues long: DNA-directed RNA polymerase subunit beta' (1393 aa).

Zn(2+) contacts are provided by Cys72, Cys74, Cys87, and Cys90. Mg(2+) contacts are provided by Asp463, Asp465, and Asp467. Residues Cys812, Cys887, Cys894, and Cys897 each coordinate Zn(2+).

It belongs to the RNA polymerase beta' chain family. The RNAP catalytic core consists of 2 alpha, 1 beta, 1 beta' and 1 omega subunit. When a sigma factor is associated with the core the holoenzyme is formed, which can initiate transcription. Requires Mg(2+) as cofactor. It depends on Zn(2+) as a cofactor.

The enzyme catalyses RNA(n) + a ribonucleoside 5'-triphosphate = RNA(n+1) + diphosphate. In terms of biological role, DNA-dependent RNA polymerase catalyzes the transcription of DNA into RNA using the four ribonucleoside triphosphates as substrates. In Chlamydia caviae (strain ATCC VR-813 / DSM 19441 / 03DC25 / GPIC) (Chlamydophila caviae), this protein is DNA-directed RNA polymerase subunit beta'.